Reading from the N-terminus, the 255-residue chain is Triosephosphate isomerase (255 aa).

Residue 9–11 (NWK) coordinates substrate. H95 acts as the Electrophile in catalysis. E167 acts as the Proton acceptor in catalysis. Substrate-binding positions include G173, S212, and 233–234 (GG).

It belongs to the triosephosphate isomerase family. As to quaternary structure, homodimer.

Its subcellular location is the cytoplasm. It carries out the reaction D-glyceraldehyde 3-phosphate = dihydroxyacetone phosphate. It functions in the pathway carbohydrate biosynthesis; gluconeogenesis. It participates in carbohydrate degradation; glycolysis; D-glyceraldehyde 3-phosphate from glycerone phosphate: step 1/1. Functionally, involved in the gluconeogenesis. Catalyzes stereospecifically the conversion of dihydroxyacetone phosphate (DHAP) to D-glyceraldehyde-3-phosphate (G3P). The chain is Triosephosphate isomerase from Erwinia tasmaniensis (strain DSM 17950 / CFBP 7177 / CIP 109463 / NCPPB 4357 / Et1/99).